The primary structure comprises 480 residues: Cysteine--tRNA ligase (480 aa).

Cys27 provides a ligand contact to Zn(2+). Residues 29-39 (PTVYNYAHIGN) carry the 'HIGH' region motif. Zn(2+) contacts are provided by Cys221, His246, and Glu250. The short motif at 278-282 (KMSKS) is the 'KMSKS' region element. Lys281 is a binding site for ATP.

This sequence belongs to the class-I aminoacyl-tRNA synthetase family. Monomer. It depends on Zn(2+) as a cofactor.

It localises to the cytoplasm. It carries out the reaction tRNA(Cys) + L-cysteine + ATP = L-cysteinyl-tRNA(Cys) + AMP + diphosphate. The chain is Cysteine--tRNA ligase from Borreliella burgdorferi (strain ZS7) (Borrelia burgdorferi).